Here is a 117-residue protein sequence, read N- to C-terminus: Membrane-anchored ubiquitin-fold protein 1 (117 aa).

One can recognise a Ubiquitin-like domain in the interval 8–74 (LEIKFRLTDG…LENSKTVKDY (67 aa)). C112 carries S-palmitoyl cysteine lipidation. Residue C114 is modified to Cysteine methyl ester. Residue C114 is the site of S-farnesyl cysteine attachment. Positions 115-117 (SVM) are cleaved as a propeptide — removed in mature form.

It localises to the cell membrane. Its function is as follows. May serve as docking site to facilitate the association of other proteins to the plasma membrane. The polypeptide is Membrane-anchored ubiquitin-fold protein 1 (MUB1) (Arabidopsis thaliana (Mouse-ear cress)).